The chain runs to 414 residues: Probable aminotransferase TAT2 (414 aa).

The protein belongs to the class-I pyridoxal-phosphate-dependent aminotransferase family. The cofactor is pyridoxal 5'-phosphate.

The polypeptide is Probable aminotransferase TAT2 (Arabidopsis thaliana (Mouse-ear cress)).